The chain runs to 645 residues: MTTMPPEMSATTAAPVGSAPSATAHHPAAVGGGMPRPASPAVGSNTTTATATTATRSRFMITDILAGAAAASAAAAAAAAALAAASSGGGRGSPTDSEREQSLVAQHHHHHQQQQQHHHHQQQQQQQQHQQAALQQYIVQQQQLLRFEREREREREREHYRERHSPPGNNPYAHHPMPPHLLAHFPPAHYAVLQQQQQQQQQQQHPHPHHLQLERERLEALHRHGHGLTGDPAQHLSHLSHLSHQQHHPHLHHPMHDERSRSPLMLQQLGGNGGNNNNNNNNSSSASNNNNNNNNSASANSNIISGNSSSSNNNNGSGNGNMLLGGPGSSISGDQASTIDDSDSDDCGGKDDDGDDSMKNGSSANGDSSSHLSLSLSKKQRKARTAFTDHQLQTLEKSFERQKYLSVQDRMELANKLELSDCQVKTWYQNRRTKWKRQTAVGLELLAEAGNYAAFQRLYGGATPYLSAWPYAAAAAAQSPHGATPSAIDIYYRQAAAAAAMQKPSLPASYRMYQSSIPPGMSLPGMPAPPPPGAAPMLSGYYAAAAAAAASAGAQQQQQQPPAASRSPATSQSANSEADCERTSSSSRQRLITPSPPLNPGSPPHRERINEEEDRERDEERDIERERERERERDEDDEEELALEV.

6 disordered regions span residues 1 to 50 (MTTM…TTAT), 86 to 134 (SSGG…QAAL), 149 to 176 (RERE…AHHP), 240 to 259 (SHLS…HDER), 265 to 385 (MLQQ…KART), and 553 to 645 (GAQQ…ALEV). Residues 18–29 (SAPSATAHHPAA) show a composition bias toward low complexity. Over residues 106–121 (QHHHHHQQQQQHHHHQ) the composition is skewed to basic residues. The segment covering 122-134 (QQQQQQQHQQAAL) has biased composition (low complexity). Over residues 149-165 (REREREREREHYRERHS) the composition is skewed to basic and acidic residues. Over residues 244–253 (HQQHHPHLHH) the composition is skewed to basic residues. A compositionally biased stretch (low complexity) spans 275-316 (NNNNNNNNSSSASNNNNNNNNSASANSNIISGNSSSSNNNNG). The span at 317-328 (SGNGNMLLGGPG) shows a compositional bias: gly residues. Residues 329 to 339 (SSISGDQASTI) are compositionally biased toward polar residues. The segment covering 362-377 (SSANGDSSSHLSLSLS) has biased composition (low complexity). Residues 380 to 439 (QRKARTAFTDHQLQTLEKSFERQKYLSVQDRMELANKLELSDCQVKTWYQNRRTKWKRQT) constitute a DNA-binding region (homeobox). Over residues 553–574 (GAQQQQQQPPAASRSPATSQSA) the composition is skewed to low complexity. A compositionally biased stretch (polar residues) spans 583–592 (TSSSSRQRLI). Thr593 is subject to Phosphothreonine. Pro residues predominate over residues 594 to 603 (PSPPLNPGSP). Phosphoserine occurs at positions 595 and 602. Basic and acidic residues predominate over residues 618-632 (DEERDIERERERERE). Over residues 633 to 645 (RDEDDEEELALEV) the composition is skewed to acidic residues.

This sequence belongs to the Antp homeobox family. In terms of tissue distribution, B-H1 and B-H2 are abundant in the eye-antenna imaginal disk. Expressed in R1 and R6 cells throughout larval stage until 30 hours after puparium formation, at which time expression is seen in the anterior and posterior primary pigment cells. Coexpressed in embryonic glial cells, neurons of the CNS and PNS, most latitudinal anterior cells of the developing notum and the central circular region of the leg and antennal imaginal disk throughout larval development.

The protein localises to the nucleus. B-H1 and B-H2 are regulated by members of the wg signaling pathway; wg and dpp. B-H1 and B-H2 are coexpressed and functionally required in R1 and R6 receptor cells and primary pigment cells for normal eye development. Coexpression is also required for the fate determination of external sensory organs, formation of notal microchaetae, formation of presutural macrochaetae, antennal development and for distal leg morphogenesis; segmentation and specification of tarsal segments 3-5. The chain is Homeobox protein B-H2 (B-H2) from Drosophila melanogaster (Fruit fly).